Consider the following 96-residue polypeptide: Small ribosomal subunit protein bS6 (96 aa).

Belongs to the bacterial ribosomal protein bS6 family.

In terms of biological role, binds together with bS18 to 16S ribosomal RNA. In Corynebacterium aurimucosum (strain ATCC 700975 / DSM 44827 / CIP 107346 / CN-1) (Corynebacterium nigricans), this protein is Small ribosomal subunit protein bS6.